The primary structure comprises 200 residues: Large ribosomal subunit protein uL4 (200 aa).

Positions 38-65 are disordered; sequence GRQGSKAQKTRSEVSGGGKKPWRQKGTG.

It belongs to the universal ribosomal protein uL4 family. As to quaternary structure, part of the 50S ribosomal subunit.

In terms of biological role, one of the primary rRNA binding proteins, this protein initially binds near the 5'-end of the 23S rRNA. It is important during the early stages of 50S assembly. It makes multiple contacts with different domains of the 23S rRNA in the assembled 50S subunit and ribosome. Its function is as follows. Forms part of the polypeptide exit tunnel. This is Large ribosomal subunit protein uL4 from Pseudomonas aeruginosa (strain LESB58).